The following is a 456-amino-acid chain: Crinkler effector protein 2 (456 aa).

The first 17 residues, Met1–Pro17, serve as a signal peptide directing secretion. The interval Val18–Lys54 is LQLFLAK domain. Residues Gln55–Ile136 are DWL domain. An HVLVXXP motif motif is present at residues His137–Pro143. The N-linked (GlcNAc...) asparagine glycan is linked to Asn338.

Belongs to the Crinkler effector family.

It localises to the secreted. Its subcellular location is the host nucleus. Its function is as follows. Secreted effector that effector that induces cell death when expressed in host plants. Induces the expression of defense response genes in tomato. In Phytophthora infestans (Potato late blight agent), this protein is Crinkler effector protein 2.